The following is a 194-amino-acid chain: NADH-quinone oxidoreductase subunit B (194 aa).

Positions 1–11 (MGVIATPPPSV) are enriched in pro residues. The segment at 1-24 (MGVIATPPPSVQGPSSQVPSSAPI) is disordered. The segment covering 12 to 21 (QGPSSQVPSS) has biased composition (low complexity). Positions 72, 73, 137, and 167 each coordinate [4Fe-4S] cluster.

This sequence belongs to the complex I 20 kDa subunit family. In terms of assembly, NDH-1 is composed of 14 different subunits. Subunits NuoB, C, D, E, F, and G constitute the peripheral sector of the complex. [4Fe-4S] cluster serves as cofactor.

It is found in the cell inner membrane. It catalyses the reaction a quinone + NADH + 5 H(+)(in) = a quinol + NAD(+) + 4 H(+)(out). In terms of biological role, NDH-1 shuttles electrons from NADH, via FMN and iron-sulfur (Fe-S) centers, to quinones in the respiratory chain. The immediate electron acceptor for the enzyme in this species is believed to be ubiquinone. Couples the redox reaction to proton translocation (for every two electrons transferred, four hydrogen ions are translocated across the cytoplasmic membrane), and thus conserves the redox energy in a proton gradient. The chain is NADH-quinone oxidoreductase subunit B from Rhodospirillum centenum (strain ATCC 51521 / SW).